Consider the following 222-residue polypeptide: Eukaryotic translation initiation factor 3 subunit K (222 aa).

The PCI domain occupies 46–208 (YDLEANLAVL…KIKTKNITEK (163 aa)).

This sequence belongs to the eIF-3 subunit K family. In terms of assembly, component of the eukaryotic translation initiation factor 3 (eIF-3) complex. The eIF-3 complex interacts with pix.

The protein localises to the cytoplasm. In terms of biological role, component of the eukaryotic translation initiation factor 3 (eIF-3) complex, which is involved in protein synthesis of a specialized repertoire of mRNAs and, together with other initiation factors, stimulates binding of mRNA and methionyl-tRNAi to the 40S ribosome. The eIF-3 complex specifically targets and initiates translation of a subset of mRNAs involved in cell proliferation. The protein is Eukaryotic translation initiation factor 3 subunit K of Drosophila mojavensis (Fruit fly).